We begin with the raw amino-acid sequence, 447 residues long: UDP-N-acetylmuramoylalanine--D-glutamate ligase (447 aa).

G112–T118 is a binding site for ATP.

It belongs to the MurCDEF family.

It localises to the cytoplasm. The catalysed reaction is UDP-N-acetyl-alpha-D-muramoyl-L-alanine + D-glutamate + ATP = UDP-N-acetyl-alpha-D-muramoyl-L-alanyl-D-glutamate + ADP + phosphate + H(+). The protein operates within cell wall biogenesis; peptidoglycan biosynthesis. Cell wall formation. Catalyzes the addition of glutamate to the nucleotide precursor UDP-N-acetylmuramoyl-L-alanine (UMA). This is UDP-N-acetylmuramoylalanine--D-glutamate ligase from Legionella pneumophila (strain Lens).